The primary structure comprises 219 residues: Small ribosomal subunit protein uS3c (219 aa).

A KH type-2 domain is found at Ile43–Glu118.

It belongs to the universal ribosomal protein uS3 family. As to quaternary structure, part of the 30S ribosomal subunit.

The protein localises to the plastid. The polypeptide is Small ribosomal subunit protein uS3c (rps3) (Cuscuta exaltata (Tall dodder)).